Reading from the N-terminus, the 78-residue chain is RNA-binding protein Hfq (78 aa).

The Sm domain maps to 10–69; the sequence is DPFLNALRKEHVPVSIYLVNGIKLQGHIESFDQYVVLLRNTVTQMVYKHAISTVVPARAV.

Belongs to the Hfq family. In terms of assembly, homohexamer.

Functionally, RNA chaperone that binds small regulatory RNA (sRNAs) and mRNAs to facilitate mRNA translational regulation in response to envelope stress, environmental stress and changes in metabolite concentrations. Also binds with high specificity to tRNAs. This Janthinobacterium sp. (strain Marseille) (Minibacterium massiliensis) protein is RNA-binding protein Hfq.